Consider the following 152-residue polypeptide: UPF0178 protein SAB0630c (152 aa).

Belongs to the UPF0178 family.

The protein is UPF0178 protein SAB0630c of Staphylococcus aureus (strain bovine RF122 / ET3-1).